Reading from the N-terminus, the 147-residue chain is Ribonuclease VapC43 (147 aa).

A PINc domain is found at 3–139 (CVDVNVLVYA…ARFRRLRWRH (137 aa)). Positions 5 and 108 each coordinate Mg(2+).

It belongs to the PINc/VapC protein family. Mg(2+) serves as cofactor.

Its function is as follows. Toxic component of a type II toxin-antitoxin (TA) system. An RNase. Its toxic effect is neutralized by coexpression with cognate antitoxin VapB43. In Mycobacterium tuberculosis (strain CDC 1551 / Oshkosh), this protein is Ribonuclease VapC43.